Consider the following 521-residue polypeptide: Ribonuclease Y (521 aa).

Residues 5–25 (TVWILISILLATVGAVVGFFV) traverse the membrane as a helical segment. The disordered stretch occupies residues 87–117 (KQENRLMQKEENLDRKDETLDNRERQLEKKE). The 64-residue stretch at 211–274 (TVSVVNLPND…ETARIALDKL (64 aa)) folds into the KH domain. An HD domain is found at 337–430 (VLKHSMEVAY…VAAADALSAA (94 aa)).

Belongs to the RNase Y family.

It is found in the cell membrane. In terms of biological role, endoribonuclease that initiates mRNA decay. The sequence is that of Ribonuclease Y from Bacillus mycoides (strain KBAB4) (Bacillus weihenstephanensis).